We begin with the raw amino-acid sequence, 373 residues long: Securin (373 aa).

The segment covering 1 to 10 (MMPANEDKEN) has biased composition (basic and acidic residues). Residues 1–27 (MMPANEDKENNIVYTGNESSGINFPQT) are disordered. A compositionally biased stretch (polar residues) spans 12 to 26 (IVYTGNESSGINFPQ). The D-box motif lies at 85–88 (RLPL). Positions 177-278 (ADSGKNEESS…LPYVPEGYSP (102 aa)) are disordered. A phosphoserine mark is found at S185, S186, S212, and S213. The span at 185-194 (SSDDDEGNED) shows a compositional bias: acidic residues. Residues 225–235 (LFNEQGGLQQL) show a composition bias toward low complexity. Residues 240 to 256 (TKNEQKTKNDKSDKTDD) show a composition bias toward basic and acidic residues. Position 277 is a phosphoserine (S277). S292 carries the post-translational modification Phosphoserine; by CDC28.

This sequence belongs to the securin family. Interacts with the caspase-like ESP1, and prevents its protease activity probably by covering its active site. Interacts with CDC20. Phosphorylated by CDC28. The phosphorylation may be important for ESP1 localization to the nucleus. In terms of processing, ubiquitinated by the anaphase promoting complex (APC) at the onset of anaphase, conducting to its degradation.

It localises to the cytoplasm. The protein resides in the nucleus. Functionally, regulatory protein, which plays a central role in chromosome stability. Probably acts by blocking the action of key proteins. During the mitosis, it blocks Separase/ESP1 function, preventing the proteolysis of the cohesin complex and the subsequent segregation of the chromosomes. At the onset of anaphase, it is ubiquitinated, conducting to its destruction and to the liberation of ESP1. The chain is Securin (PDS1) from Saccharomyces cerevisiae (strain ATCC 204508 / S288c) (Baker's yeast).